The sequence spans 78 residues: uncharacterized protein (78 aa).

Residues 58-78 (EANDPEKKIPSTAAKAISLSP) form a disordered region.

This is an uncharacterized protein from Vaccinia virus (strain Copenhagen) (VACV).